The following is a 78-amino-acid chain: U29-theraphotoxin-Cg1a (78 aa).

The signal sequence occupies residues 1–19 (MRYQTVFWILLIALCTVNP). Cystine bridges form between C42–C56, C49–C60, C55–C77, and C67–C73.

It belongs to the neurotoxin 13 (insecticidal toxin ABC) family. 03 (JZTX-59) subfamily. In terms of tissue distribution, expressed by the venom gland.

It localises to the secreted. Functionally, probable ion channel inhibitor. The chain is U29-theraphotoxin-Cg1a from Chilobrachys guangxiensis (Chinese earth tiger tarantula).